A 390-amino-acid polypeptide reads, in one-letter code: S-adenosylmethionine synthase 2 (390 aa).

Glu-9 lines the Mg(2+) pocket. ATP is bound at residue His-15. Glu-43 contacts K(+). Residues Glu-56 and Gln-99 each coordinate L-methionine. Residues 167–169, 235–238, Asp-246, 252–253, Ala-269, Lys-273, and Lys-277 contribute to the ATP site; these read DGK, SGRF, and RK. Position 246 (Asp-246) interacts with L-methionine. Residue Lys-277 participates in L-methionine binding.

Belongs to the AdoMet synthase family. In terms of assembly, homotetramer. The cofactor is Mn(2+). Requires Mg(2+) as cofactor. Co(2+) serves as cofactor. It depends on K(+) as a cofactor.

The protein localises to the cytoplasm. It carries out the reaction L-methionine + ATP + H2O = S-adenosyl-L-methionine + phosphate + diphosphate. It participates in amino-acid biosynthesis; S-adenosyl-L-methionine biosynthesis; S-adenosyl-L-methionine from L-methionine: step 1/1. Its function is as follows. Catalyzes the formation of S-adenosylmethionine from methionine and ATP. The reaction comprises two steps that are both catalyzed by the same enzyme: formation of S-adenosylmethionine (AdoMet) and triphosphate, and subsequent hydrolysis of the triphosphate. This is S-adenosylmethionine synthase 2 (SAMS2) from Nicotiana tabacum (Common tobacco).